Here is a 303-residue protein sequence, read N- to C-terminus: Uridylate-specific endoribonuclease C (303 aa).

The first 16 residues, 1-16, serve as a signal peptide directing secretion; that stretch reads MVYLVFLCLLPSLISG. Residues 32–303 enclose the EndoU domain; that stretch reads TDAEIQSLAE…KRFVASSYPI (272 aa). Active-site residues include His-181, His-196, and Lys-239. A glycan (N-linked (GlcNAc...) asparagine) is linked at Asn-287.

This sequence belongs to the ENDOU family. As to quaternary structure, monomer. It depends on Mn(2+) as a cofactor.

It is found in the secreted. The catalysed reaction is ribonucleotidyl-uridine-RNA = a 5'-end dephospho-uridine-RNA + a 3'-end 2',3'-cyclophospho-ribonucleotide-RNA. Its function is as follows. Endoribonuclease that cleaves single-stranded RNAs at 5' of uridylates and releases a product with a 2',3'-cyclic phosphate at the 3'-end. The sequence is that of Uridylate-specific endoribonuclease C (endou-c) from Xenopus laevis (African clawed frog).